The following is a 407-amino-acid chain: Peptidase T (407 aa).

Residue His81 participates in Zn(2+) binding. Residue Asp83 is part of the active site. Zn(2+) is bound at residue Asp142. Glu176 functions as the Proton acceptor in the catalytic mechanism. Zn(2+) is bound by residues Glu177, Asp199, and His381.

The protein belongs to the peptidase M20B family. Zn(2+) is required as a cofactor.

It is found in the cytoplasm. It catalyses the reaction Release of the N-terminal residue from a tripeptide.. Its function is as follows. Cleaves the N-terminal amino acid of tripeptides. The polypeptide is Peptidase T (Streptococcus pneumoniae (strain JJA)).